The primary structure comprises 337 residues: Ketol-acid reductoisomerase (NADP(+)) (337 aa).

Residues 3–183 enclose the KARI N-terminal Rossmann domain; the sequence is VEMFYDDDAD…GGARAGVIKT (181 aa). Residues 26–29, Lys-49, Ser-52, Ser-54, and 84–87 each bind NADP(+); these read YGSQ and DTAQ. His-109 is a catalytic residue. Gly-135 lines the NADP(+) pocket. The region spanning 184–329 is the KARI C-terminal knotted domain; the sequence is TFKEETETDL…KKLRDLMSWV (146 aa). The Mg(2+) site is built by Asp-192, Glu-196, Glu-228, and Glu-232. A substrate-binding site is contributed by Ser-253.

Belongs to the ketol-acid reductoisomerase family. Mg(2+) is required as a cofactor.

The catalysed reaction is (2R)-2,3-dihydroxy-3-methylbutanoate + NADP(+) = (2S)-2-acetolactate + NADPH + H(+). The enzyme catalyses (2R,3R)-2,3-dihydroxy-3-methylpentanoate + NADP(+) = (S)-2-ethyl-2-hydroxy-3-oxobutanoate + NADPH + H(+). It participates in amino-acid biosynthesis; L-isoleucine biosynthesis; L-isoleucine from 2-oxobutanoate: step 2/4. The protein operates within amino-acid biosynthesis; L-valine biosynthesis; L-valine from pyruvate: step 2/4. Involved in the biosynthesis of branched-chain amino acids (BCAA). Catalyzes an alkyl-migration followed by a ketol-acid reduction of (S)-2-acetolactate (S2AL) to yield (R)-2,3-dihydroxy-isovalerate. In the isomerase reaction, S2AL is rearranged via a Mg-dependent methyl migration to produce 3-hydroxy-3-methyl-2-ketobutyrate (HMKB). In the reductase reaction, this 2-ketoacid undergoes a metal-dependent reduction by NADPH to yield (R)-2,3-dihydroxy-isovalerate. In Rhodococcus opacus (strain B4), this protein is Ketol-acid reductoisomerase (NADP(+)).